We begin with the raw amino-acid sequence, 363 residues long: 4-hydroxy-2-oxovalerate aldolase 1 (363 aa).

Residues 13–265 form the Pyruvate carboxyltransferase domain; that stretch reads VRMTDTSLRD…KTGIDFFDIA (253 aa). 21 to 22 contributes to the substrate binding site; it reads RD. Asp22 contributes to the Mn(2+) binding site. Catalysis depends on His25, which acts as the Proton acceptor. Ser175 and His204 together coordinate substrate. 2 residues coordinate Mn(2+): His204 and His206. Tyr295 is a binding site for substrate.

It belongs to the 4-hydroxy-2-oxovalerate aldolase family.

It carries out the reaction (S)-4-hydroxy-2-oxopentanoate = acetaldehyde + pyruvate. The chain is 4-hydroxy-2-oxovalerate aldolase 1 from Mycobacterium sp. (strain JLS).